Reading from the N-terminus, the 734-residue chain is Photosystem I P700 chlorophyll a apoprotein A2 (734 aa).

8 helical membrane-spanning segments follow: residues 46 to 69, 135 to 158, 175 to 199, 273 to 291, 330 to 353, 369 to 395, 417 to 439, and 517 to 535; these read IFAS…FHVA, LYSG…LHLQ, LNHH…HVAI, MAHH…GHMY, IHFQ…QHMY, AALY…IFFI, AIIS…LYVH, and FLVH…LILV. The [4Fe-4S] cluster site is built by cysteine 559 and cysteine 568. The next 2 helical transmembrane spans lie at 575-596 and 643-665; these read AFYL…YWHW and LSVW…MFLI. The chlorophyll a site is built by histidine 654, methionine 662, and tyrosine 670. Tryptophan 671 provides a ligand contact to phylloquinone. Residues 707 to 727 form a helical membrane-spanning segment; that stretch reads LVGLAHFSVGYIFTYAAFLIA.

This sequence belongs to the PsaA/PsaB family. In terms of assembly, the PsaA/B heterodimer binds the P700 chlorophyll special pair and subsequent electron acceptors. PSI consists of a core antenna complex that captures photons, and an electron transfer chain that converts photonic excitation into a charge separation. The eukaryotic PSI reaction center is composed of at least 11 subunits. P700 is a chlorophyll a/chlorophyll a' dimer, A0 is one or more chlorophyll a, A1 is one or both phylloquinones and FX is a shared 4Fe-4S iron-sulfur center. serves as cofactor.

Its subcellular location is the plastid. The protein resides in the chloroplast thylakoid membrane. It carries out the reaction reduced [plastocyanin] + hnu + oxidized [2Fe-2S]-[ferredoxin] = oxidized [plastocyanin] + reduced [2Fe-2S]-[ferredoxin]. PsaA and PsaB bind P700, the primary electron donor of photosystem I (PSI), as well as the electron acceptors A0, A1 and FX. PSI is a plastocyanin-ferredoxin oxidoreductase, converting photonic excitation into a charge separation, which transfers an electron from the donor P700 chlorophyll pair to the spectroscopically characterized acceptors A0, A1, FX, FA and FB in turn. Oxidized P700 is reduced on the lumenal side of the thylakoid membrane by plastocyanin. This chain is Photosystem I P700 chlorophyll a apoprotein A2, found in Lotus japonicus (Lotus corniculatus var. japonicus).